Reading from the N-terminus, the 159-residue chain is Transcription antitermination protein NusB (159 aa).

It belongs to the NusB family.

In terms of biological role, involved in transcription antitermination. Required for transcription of ribosomal RNA (rRNA) genes. Binds specifically to the boxA antiterminator sequence of the ribosomal RNA (rrn) operons. The protein is Transcription antitermination protein NusB of Stenotrophomonas maltophilia (strain K279a).